Reading from the N-terminus, the 717-residue chain is Patatin-like phospholipase domain-containing protein AO090003000839 (717 aa).

The helical transmembrane segment at 87-107 (WPFLFIVFGWITVLGFAYALT) threads the bilayer. The 192-residue stretch at 277–468 (LCLSGGATFA…RTDIPIRALN (192 aa)) folds into the PNPLA domain. Positions 308–312 (GTSGG) match the GXSXG motif. S310 acts as the Nucleophile in catalysis. The Proton acceptor role is filled by D455. The disordered stretch occupies residues 620–696 (VSPAQSRRKR…STGNIFQEMR (77 aa)). Basic and acidic residues predominate over residues 639–658 (MVERLDHNLPDRQPDNKEDL). Low complexity predominate over residues 660-673 (DSSGIDSNVSSRDS).

The protein belongs to the PLPL family.

The protein localises to the membrane. Its function is as follows. Probable lipid hydrolase. In Aspergillus oryzae (strain ATCC 42149 / RIB 40) (Yellow koji mold), this protein is Patatin-like phospholipase domain-containing protein AO090003000839.